Consider the following 136-residue polypeptide: ATP synthase F(0) complex subunit C1, mitochondrial (136 aa).

The N-terminal 61 residues, 1–61 (MQTTKALLIS…REFQTSVISR (61 aa)), are a transit peptide targeting the mitochondrion. Residues 77–97 (VGVAGSGAGIGTVFGSLIIGY) form a helical membrane-spanning segment. Residue lysine 104 is modified to N6,N6,N6-trimethyllysine. The helical transmembrane segment at 112–132 (ILGFALSEAMGLFCLMVAFLI) threads the bilayer.

It belongs to the ATPase C chain family. As to quaternary structure, homooctamer; the c-ring consists of eight c subunits forming a circle, and each subunit adopts a hairpin shape. Component of the ATP synthase complex composed at least of ATP5F1A/subunit alpha, ATP5F1B/subunit beta, ATP5MC1/subunit c (homooctomer), MT-ATP6/subunit a, MT-ATP8/subunit 8, ATP5ME/subunit e, ATP5MF/subunit f, ATP5MG/subunit g, ATP5MK/subunit k, ATP5MJ/subunit j, ATP5F1C/subunit gamma, ATP5F1D/subunit delta, ATP5F1E/subunit epsilon, ATP5PF/subunit F6, ATP5PB/subunit b, ATP5PD/subunit d, ATP5PO/subunit OSCP. ATP synthase complex consists of a soluble F(1) head domain (subunits alpha(3) and beta(3)) - the catalytic core - and a membrane F(0) domain - the membrane proton channel (subunits c, a, 8, e, f, g, k and j). These two domains are linked by a central stalk (subunits gamma, delta, and epsilon) rotating inside the F1 region and a stationary peripheral stalk (subunits F6, b, d, and OSCP). Interacts with TMEM70 (homooligomer form); this interaction facilitates the oligomer formation of subunit c/ATP5MC1 (c-ring) and the c-ring membrane insertion and also protects ATP5MC1 against intramitochondrial proteolysis. In terms of processing, trimethylated by ATPSCKMT at Lys-104. Methylation is required for proper incorporation of the C subunit into the ATP synthase complex and mitochondrial respiration.

The protein resides in the mitochondrion membrane. The catalysed reaction is H(+)(in) = H(+)(out). Its function is as follows. Subunit c, of the mitochondrial membrane ATP synthase complex (F(1)F(0) ATP synthase or Complex V) that produces ATP from ADP in the presence of a proton gradient across the membrane which is generated by electron transport complexes of the respiratory chain. ATP synthase complex consist of a soluble F(1) head domain - the catalytic core - and a membrane F(1) domain - the membrane proton channel. These two domains are linked by a central stalk rotating inside the F(1) region and a stationary peripheral stalk. During catalysis, ATP synthesis in the catalytic domain of F(1) is coupled via a rotary mechanism of the central stalk subunits to proton translocation. With the subunit a (MT-ATP6), forms the proton-conducting channel in the F(0) domain, that contains two crucial half-channels (inlet and outlet) that facilitate proton movement from the mitochondrial intermembrane space (IMS) into the matrix. Protons are taken up via the inlet half-channel and released through the outlet half-channel, following a Grotthuss mechanism. The protein is ATP synthase F(0) complex subunit C1, mitochondrial of Rattus norvegicus (Rat).